The following is a 169-amino-acid chain: 3-hydroxyacyl-[acyl-carrier-protein] dehydratase FabZ (169 aa).

Residue His66 is part of the active site.

The protein belongs to the thioester dehydratase family. FabZ subfamily.

Its subcellular location is the cytoplasm. It catalyses the reaction a (3R)-hydroxyacyl-[ACP] = a (2E)-enoyl-[ACP] + H2O. Functionally, involved in unsaturated fatty acids biosynthesis. Catalyzes the dehydration of short chain beta-hydroxyacyl-ACPs and long chain saturated and unsaturated beta-hydroxyacyl-ACPs. This chain is 3-hydroxyacyl-[acyl-carrier-protein] dehydratase FabZ, found in Helicobacter hepaticus (strain ATCC 51449 / 3B1).